A 53-amino-acid chain; its full sequence is MQKYVCDICGYVYDPAVGDPDNGVAPGTAFADLPEDWVCPECGVSKDEFSPEA.

The region spanning 1 to 53 is the Rubredoxin-like domain; the sequence is MQKYVCDICGYVYDPAVGDPDNGVAPGTAFADLPEDWVCPECGVSKDEFSPEA. Fe cation contacts are provided by Cys-6, Cys-9, Cys-39, and Cys-42.

Belongs to the rubredoxin family. Fe(3+) is required as a cofactor.

In terms of biological role, rubredoxin is a small nonheme, iron protein lacking acid-labile sulfide. Its single Fe, chelated to 4 Cys, functions as an electron acceptor and may also stabilize the conformation of the molecule. The sequence is that of Rubredoxin from Butyribacterium methylotrophicum.